A 31-amino-acid polypeptide reads, in one-letter code: Nemertide alpha-7 (31 aa).

Intrachain disulfides connect cysteine 2-cysteine 16, cysteine 9-cysteine 20, and cysteine 15-cysteine 26. Proline 29 carries the 4-hydroxyproline modification.

The protein belongs to the nemertide family. Confined to the epidermis and to the mucus layer.

It is found in the secreted. Its function is as follows. Potent toxin, demonstrating strong inhibitory effects on insect sodium channels (Nav) and reduced activity on mammalian sodium channels. Potently inhibits inactivation of insect sodium channels of B.germanica (BgNav1) (EC(50)=9.5 nM). The toxin also delays the inactivation of most mammalian Nav (human Nav1.1/SCN1A; EC(50)=171.5 nM, rat Nav1.2/SCN2A; EC(50)=50.4 nM, rat Nav1.3/SCN3A; EC(50)=170.2 nM, rat Nav1.4/SCN4A; EC(50)=810.6 nM, human Nav1.5/SCN5A; EC(50)=155.6 nM, mouse Nav1.6/SCN8A; EC(50)=147.6 nM, human Nav1.9/SCN9A; EC(50)=129 nM). Inactivation is completely prevented by a concentration of 1 uM, resulting in sustained, non-inactivating currents. In addition, the toxin significantly enhances the recovery from inactivation, and the open state is not required for the toxin to interact with the channel. In vivo, injection into brine shrimp (Artemia salina) stops movement or causes death after 24 hours (EC(50)=6.1 uM). The chain is Nemertide alpha-7 from Lineus ruber (Red bootlace).